A 345-amino-acid polypeptide reads, in one-letter code: MSDIPFTLDQLRILKAIASEGSFKRAADTLYVSQPAVSLQVQNLEKQLSVPLFDRGGRKAQLTEAGHLLLNYGEKIITLCQETCRAIEDLQNLQGGTLIVGASQTTGTYLLPRMIGMFRQQYPDVTVQLQVHSTRRTAWGVANGQVDLAIIGGEVPAELQETLTVLPYAEDELALILPVLHPLAQAETIQKEDLYKLKFISLDSQSTIRKVIDKVLSQGEIDTKRLKIEMELNSIEAIKNAVQSGLGAAFVSTTAIEKELEMNVLHIAPIKNVEIRRVLSVIINPNRYRSKASAAFIREVLPQFSTHPDALDPERLFANPYSSNNGDRQGDGKDGKGSIEIDSVT.

The HTH lysR-type domain maps to 6–63; that stretch reads FTLDQLRILKAIASEGSFKRAADTLYVSQPAVSLQVQNLEKQLSVPLFDRGGRKAQLT. Residues 23 to 42 constitute a DNA-binding region (H-T-H motif); sequence FKRAADTLYVSQPAVSLQVQ. The disordered stretch occupies residues 311-345; the sequence is LDPERLFANPYSSNNGDRQGDGKDGKGSIEIDSVT. The span at 328–339 shows a compositional bias: basic and acidic residues; the sequence is RQGDGKDGKGSI.

The protein belongs to the LysR transcriptional regulatory family.

Its function is as follows. Trans-acting transcriptional regulator of RuBisCO genes (rbcL and rbcS) expression. This Synechocystis sp. (strain ATCC 27184 / PCC 6803 / Kazusa) protein is Probable RuBisCO transcriptional regulator (rbcR).